Here is a 396-residue protein sequence, read N- to C-terminus: MADVYLDNNATTRVDDEIVEAMLPFFTEQFGNPSSLHSFGNQVGLALKRARQQRAGVLGEHDSEIIFTSCGTESDHAILSALSPARAQDLITTVVEHPAVLSLCDYLASEGYTVHKLPVDKKGRLDLDHYASLLNDDVAVVSVMWANNETGTLFPVEEMARMADEAGIMFHTDAVQAVRKLPIDLKNSSIHMLSLSGHKLHRKGVGVLYLRRGTRFRRCCRGHQERPAGGTENAASIIAMGWAAERALAFMEHENTEVKRLRDKLEAGILAVVPHAFVTGDPDNRLPNTANIAFEYIEGEAILLLLNKVGIAASSGSACTSGSLEPSHVMRAMDIPYTAAHGTVRFSLSRYTTEEEIDRVIREVPPIVAQLRNVSPYWSGNGPVEHPGKAFAPVYG.

Residues 71-72 (GT), N148, Q176, and 196-198 (SGH) contribute to the pyridoxal 5'-phosphate site. K199 is modified (N6-(pyridoxal phosphate)lysine). A pyridoxal 5'-phosphate-binding site is contributed by T231. Residue C319 is the Cysteine persulfide intermediate of the active site. C319 is a binding site for [2Fe-2S] cluster.

The protein belongs to the class-V pyridoxal-phosphate-dependent aminotransferase family. NifS/IscS subfamily. Homodimer. Pyridoxal 5'-phosphate is required as a cofactor.

It carries out the reaction (sulfur carrier)-H + L-cysteine = (sulfur carrier)-SH + L-alanine. Functionally, catalyzes the removal of elemental sulfur atoms from cysteine to produce alanine. Seems to participate in the biosynthesis of the nitrogenase metalloclusters by providing the inorganic sulfur required for the Fe-S core formation. The sequence is that of Cysteine desulfurase from Azotobacter chroococcum mcd 1.